A 434-amino-acid polypeptide reads, in one-letter code: Quinolone resistance transporter (434 aa).

The next 12 helical transmembrane spans lie at 15-35 (LIPALVILYLVAYIDRAAVGF), 45-65 (GIGDAAYGLGAGLFFIGYFLF), 85-105 (ILLTWGLITMAMALIQGPKSF), 110-130 (FLLGVAEAGFFPGVLYLITQW), 142-162 (MFVLSQPIAMMIAGPLAGLLL), 175-195 (WLFVAVGLPAVLLALPTFLWL), 241-261 (VLLLALYYLPVTLSIYGLNLW), 275-295 (IQIGFLSSIPYIFGIIGLLII), 306-326 (YGHLSFLYALGACAMFLSGWL), 333-353 (LAALAVVAFCLFSSTAVFWTL), 367-387 (IALINSVGNLGGYVGPFGIGL), and 396-416 (AAGLYFLSIVMLFGLILTYIV).

It belongs to the major facilitator superfamily.

It is found in the cell inner membrane. Its function is as follows. Efflux pump that mediates resistance to quinolone-type antibiotics. The sequence is that of Quinolone resistance transporter from Acinetobacter baumannii.